A 210-amino-acid chain; its full sequence is Proteasome subunit beta (210 aa).

Positions 1-9 (MDNDKYLKG) are cleaved as a propeptide — removed in mature form; by autocatalysis. The active-site Nucleophile is the Thr-10.

It belongs to the peptidase T1B family. The 20S proteasome core is composed of 14 alpha and 14 beta subunits that assemble into four stacked heptameric rings, resulting in a barrel-shaped structure. The two inner rings, each composed of seven catalytic beta subunits, are sandwiched by two outer rings, each composed of seven alpha subunits. The catalytic chamber with the active sites is on the inside of the barrel. Has a gated structure, the ends of the cylinder being occluded by the N-termini of the alpha-subunits. Is capped at one or both ends by the proteasome regulatory ATPase, PAN.

It localises to the cytoplasm. The enzyme catalyses Cleavage of peptide bonds with very broad specificity.. Its activity is regulated as follows. The formation of the proteasomal ATPase PAN-20S proteasome complex, via the docking of the C-termini of PAN into the intersubunit pockets in the alpha-rings, triggers opening of the gate for substrate entry. Interconversion between the open-gate and close-gate conformations leads to a dynamic regulation of the 20S proteasome proteolysis activity. Component of the proteasome core, a large protease complex with broad specificity involved in protein degradation. The polypeptide is Proteasome subunit beta (Methanosarcina mazei (strain ATCC BAA-159 / DSM 3647 / Goe1 / Go1 / JCM 11833 / OCM 88) (Methanosarcina frisia)).